Reading from the N-terminus, the 144-residue chain is Peroxisomal membrane protein PEX34 (144 aa).

The next 3 membrane-spanning stretches (helical) occupy residues N18 to F30, V52 to K73, and T109 to K131.

Homooligomer. Interacts with PEX11, PEX25 and PEX27.

The protein resides in the peroxisome membrane. In terms of biological role, in concert with the three peroxisome divisional factors, PEX11, PEX25 and PEX27, controls peroxisome morphology and abundance under conditions of peroxisome proliferation. Maintains mature peroxisomes in actively dividing cells. The chain is Peroxisomal membrane protein PEX34 (PEX34) from Saccharomyces cerevisiae (strain ATCC 204508 / S288c) (Baker's yeast).